We begin with the raw amino-acid sequence, 103 residues long: Large ribosomal subunit protein bL21 (103 aa).

This sequence belongs to the bacterial ribosomal protein bL21 family. As to quaternary structure, part of the 50S ribosomal subunit. Contacts protein L20.

This protein binds to 23S rRNA in the presence of protein L20. This Clostridioides difficile (strain 630) (Peptoclostridium difficile) protein is Large ribosomal subunit protein bL21.